Consider the following 228-residue polypeptide: MTKGILGRKVGMTQVFTESGELIAVTAVEATPNVVLQVKNAETDGYSAIQLGYQDKRTVLSNKPEQGHASKANTAPKRYVREIRNAGDEFNVGDEIKVDTFQAGEYVDVTGITKGHGFQGAIKRLGQSRGPMTHGSRYHRRPGSMGAIINRVFKGKLLPGRMGNNKRTMQNIAIVHVDVENNLLLLKGNVPGANKSLLTVKSTVKVNAKHPEVKMANASASATNSEEA.

Belongs to the universal ribosomal protein uL3 family. In terms of assembly, part of the 50S ribosomal subunit. Forms a cluster with proteins L14 and L19.

One of the primary rRNA binding proteins, it binds directly near the 3'-end of the 23S rRNA, where it nucleates assembly of the 50S subunit. This chain is Large ribosomal subunit protein uL3, found in Leuconostoc mesenteroides subsp. mesenteroides (strain ATCC 8293 / DSM 20343 / BCRC 11652 / CCM 1803 / JCM 6124 / NCDO 523 / NBRC 100496 / NCIMB 8023 / NCTC 12954 / NRRL B-1118 / 37Y).